The following is a 160-amino-acid chain: Putative antiporter subunit mnhE2 (160 aa).

The next 3 helical transmembrane spans lie at 23 to 43 (FKFT…YILH), 55 to 75 (IWVA…SSIS), and 100 to 120 (SNWA…STVI).

This sequence belongs to the CPA3 antiporters (TC 2.A.63) subunit E family. As to quaternary structure, may form a heterooligomeric complex that consists of seven subunits: mnhA2, mnhB2, mnhC2, mnhD2, mnhE2, mnhF2 and mnhG2.

The protein localises to the cell membrane. This chain is Putative antiporter subunit mnhE2 (mnhE2), found in Staphylococcus epidermidis (strain ATCC 35984 / DSM 28319 / BCRC 17069 / CCUG 31568 / BM 3577 / RP62A).